Reading from the N-terminus, the 107-residue chain is Probable insulin-like peptide beta-type 3 (107 aa).

A signal peptide spans 1 to 19 (MKLSVVLALFIIFQLGAAS). A propeptide spanning residues 20–55 (LMRNWMFDFEKELEHDYDDSEIGFHNIHSLMARSRR) is cleaved from the precursor. 4 cysteine pairs are disulfide-bonded: cysteine 62/cysteine 90, cysteine 74/cysteine 103, cysteine 78/cysteine 104, and cysteine 89/cysteine 94.

Belongs to the insulin family.

It is found in the secreted. This is Probable insulin-like peptide beta-type 3 (ins-3) from Caenorhabditis elegans.